The chain runs to 574 residues: Membrane protein insertase YidC (574 aa).

The next 6 membrane-spanning stretches (helical) occupy residues 6–26, 356–376, 380–400, 447–467, 489–509, and 525–545; these read VFLI…WGKD, FSIM…LHSF, WGWA…PLSA, GGCL…WVLV, PYFI…KLTP, and PLVF…YWVV.

This sequence belongs to the OXA1/ALB3/YidC family. Type 1 subfamily. As to quaternary structure, interacts with the Sec translocase complex via SecD. Specifically interacts with transmembrane segments of nascent integral membrane proteins during membrane integration.

It is found in the cell inner membrane. In terms of biological role, required for the insertion and/or proper folding and/or complex formation of integral membrane proteins into the membrane. Involved in integration of membrane proteins that insert both dependently and independently of the Sec translocase complex, as well as at least some lipoproteins. Aids folding of multispanning membrane proteins. This chain is Membrane protein insertase YidC, found in Xanthomonas axonopodis pv. citri (strain 306).